Here is a 948-residue protein sequence, read N- to C-terminus: MLKILNTVLLFFDCFSTGTFFVLLIYLFTRLRTHLLHFSSSNCHLDVIIYQSRAVIIFLVVFVYFIGVLTCKINDKILVHTMLRNKRQLNTLFYTLILFTFALCSLSSVLFVPYTSFAIFLLSTSVFLLFSDLSVFFIVLEYYLLEIELVNYEHAKRHCLLSHLFSNQLFVDHMLGMFLKTSLFSISTTSKYAYLESIFKCTLMEQIIYIMIVFVFLPSFMRIFASYAKRMYGEQKKCLVSNKGVSSSTRKRRHSYSSGHSYVEYRRMSVHNLIGYVVNPNCHYKCWSTTFVIFVSLIILHLNNRYSERISSFKHNSSENEVFPVLYHITAYEVTSIFHFIYNIFHVINANLVVYLFLGLFLFKRIRLNKPINSQLRNLNIPKIKETLISDQVKQSPVLPKFSKKLNDIPLQSRKRIYCLHKDDDYIDRNDSSSVSTFSNTCKNSNERPSNVLDLDMLTEKIKQGLGHELSDTEILQLLSHGRLKTRELESVVRNPFRAVELRRLDLSTFLNNPHIIERIPYKDYDYRLVYGQCCEEVIGYMPIPVGKIGPLLLDGRSHYIPLATTEGCLVASTNRGCRAIFLAGGIKSVVYRDQMTRAPVVWFPSIIDSVKCIAWIDSEEGFQTLKSAFDKTSAHVNLLSVFACPAGRYIHIRFAARTGDAMGMNMVSKATDSALHCLKKYFSNMQVISLSGNMCTDKKPATINTILGRGKSVIAEAHLSADVLAQVLHTNAQRLARLTHSKNWIGSAMAGCPGMMGCNAHAANIIAGMFAATGQDLAQVVDSSSCLTQLEVDLSDDSLVASVTMPCLEVGTVGGGTRLSGQRACLDLLDLSVDRPTEHLSRIIAGTVLAAELSLMAALDTDDLVKAHMHFNRAKQSTNSHSCSHSTTTDNNDNISNIYDNHNVALSSKIPVTDNSDIRESVHSLHVKPFPVKSDLSVNPEISHYTM.

6 consecutive transmembrane segments (helical) span residues 9–25 (LLFF…VLLI), 55–71 (VIIF…VLTC), 96–112 (LILF…VLFV), 124–140 (TSVF…FIVL), 207–223 (IIYI…FMRI), and 286–302 (CWST…ILHL). The N-linked (GlcNAc...) asparagine glycan is linked to N316. A helical membrane pass occupies residues 347–363 (VINANLVVYLFLGLFLF). The linker stretch occupies residues 364–466 (KRIRLNKPIN…MLTEKIKQGL (103 aa)). The N-linked (GlcNAc...) asparagine glycan is linked to N430. The interval 467-948 (GHELSDTEIL…VNPEISHYTM (482 aa)) is catalytic. Catalysis depends on charge relay system residues E567, K699, and D777. H869 functions as the Proton donor in the catalytic mechanism. A glycan (N-linked (GlcNAc...) asparagine) is linked at N895.

The protein belongs to the HMG-CoA reductase family.

Its subcellular location is the endoplasmic reticulum membrane. The protein localises to the peroxisome membrane. The enzyme catalyses (R)-mevalonate + 2 NADP(+) + CoA = (3S)-3-hydroxy-3-methylglutaryl-CoA + 2 NADPH + 2 H(+). It functions in the pathway metabolic intermediate biosynthesis; (R)-mevalonate biosynthesis; (R)-mevalonate from acetyl-CoA: step 3/3. Functionally, this transmembrane glycoprotein is involved in the control of cholesterol and nonsterol isoprenoid compounds biosynthesis. It is the rate-limiting enzyme of sterol biosynthesis. In Schistosoma mansoni (Blood fluke), this protein is 3-hydroxy-3-methylglutaryl-coenzyme A reductase.